The following is a 330-amino-acid chain: ADP-L-glycero-D-manno-heptose-6-epimerase (330 aa).

NADP(+) is bound by residues 11-12 (FI), 32-33 (DD), Q39, Q54, 75-79 (QGACA), and N92. The Proton acceptor role is filled by Y139. K143 lines the NADP(+) pocket. N168 is a substrate binding site. NADP(+) is bound by residues V169 and K177. K177 acts as the Proton acceptor in catalysis. Residues R179, H186, 200–203 (FGEH), R213, and Y292 contribute to the substrate site.

The protein belongs to the NAD(P)-dependent epimerase/dehydratase family. HldD subfamily. As to quaternary structure, homopentamer. Requires NADP(+) as cofactor.

It carries out the reaction ADP-D-glycero-beta-D-manno-heptose = ADP-L-glycero-beta-D-manno-heptose. It functions in the pathway nucleotide-sugar biosynthesis; ADP-L-glycero-beta-D-manno-heptose biosynthesis; ADP-L-glycero-beta-D-manno-heptose from D-glycero-beta-D-manno-heptose 7-phosphate: step 4/4. Its function is as follows. Catalyzes the interconversion between ADP-D-glycero-beta-D-manno-heptose and ADP-L-glycero-beta-D-manno-heptose via an epimerization at carbon 6 of the heptose. This chain is ADP-L-glycero-D-manno-heptose-6-epimerase, found in Pseudomonas paraeruginosa (strain DSM 24068 / PA7) (Pseudomonas aeruginosa (strain PA7)).